The chain runs to 967 residues: Leucine--tRNA ligase (967 aa).

A 'HIGH' region motif is present at residues 43–53 (PYLSGHLHVGH). The 'KMSKS' region signature appears at 650–654 (KMSKS). Residue K653 participates in ATP binding.

The protein belongs to the class-I aminoacyl-tRNA synthetase family.

The protein localises to the cytoplasm. The enzyme catalyses tRNA(Leu) + L-leucine + ATP = L-leucyl-tRNA(Leu) + AMP + diphosphate. The sequence is that of Leucine--tRNA ligase from Pyrococcus furiosus (strain ATCC 43587 / DSM 3638 / JCM 8422 / Vc1).